The following is a 216-amino-acid chain: Cytidylate kinase (216 aa).

7-15 (GPSGTGKST) is a binding site for ATP.

It belongs to the cytidylate kinase family. Type 1 subfamily.

It is found in the cytoplasm. It catalyses the reaction CMP + ATP = CDP + ADP. The catalysed reaction is dCMP + ATP = dCDP + ADP. This chain is Cytidylate kinase, found in Chlamydia caviae (strain ATCC VR-813 / DSM 19441 / 03DC25 / GPIC) (Chlamydophila caviae).